Here is a 330-residue protein sequence, read N- to C-terminus: MNVYYEKDADLAYLQGKKIAVLGYGSQGHAHSLNLHESGLNVRVGLRPESASCAKAREAGLEVTSVAEATKWADIVMVLLPDQNQKAVYEAEIAPNLEPGNTLAFGHGFNIHYKQIVPASSVNVIMIAPKSPGHLVRRTYTEGNGVPCLIAVHQDPTGEAKQQALAWAKALGGTKAGVIETNFKNETETDLFGEQAVLCGGSAELIKAGFETLVEAGYPEELAYFECMHELKLIVDLYYEGGLSRMNYSVSDTAEYGGMTRGPRLITPAVKAEMKKILEEVQDGRFAKEFIDECNGGYQNLSKLRESNSNHAIEKVGAKLRNMMSWLIKK.

Residues 1–181 (MNVYYEKDAD…GGTKAGVIET (181 aa)) form the KARI N-terminal Rossmann domain. NADP(+)-binding positions include 24-27 (YGSQ), Arg-47, Ser-50, Ser-52, and 82-85 (DQNQ). The active site involves His-107. Gly-133 is an NADP(+) binding site. Residues 182-327 (NFKNETETDL…AKLRNMMSWL (146 aa)) form the KARI C-terminal knotted domain. Positions 190, 194, 226, and 230 each coordinate Mg(2+). Residue Ser-251 coordinates substrate.

Belongs to the ketol-acid reductoisomerase family. Mg(2+) is required as a cofactor.

The enzyme catalyses (2R)-2,3-dihydroxy-3-methylbutanoate + NADP(+) = (2S)-2-acetolactate + NADPH + H(+). The catalysed reaction is (2R,3R)-2,3-dihydroxy-3-methylpentanoate + NADP(+) = (S)-2-ethyl-2-hydroxy-3-oxobutanoate + NADPH + H(+). It participates in amino-acid biosynthesis; L-isoleucine biosynthesis; L-isoleucine from 2-oxobutanoate: step 2/4. The protein operates within amino-acid biosynthesis; L-valine biosynthesis; L-valine from pyruvate: step 2/4. Its function is as follows. Involved in the biosynthesis of branched-chain amino acids (BCAA). Catalyzes an alkyl-migration followed by a ketol-acid reduction of (S)-2-acetolactate (S2AL) to yield (R)-2,3-dihydroxy-isovalerate. In the isomerase reaction, S2AL is rearranged via a Mg-dependent methyl migration to produce 3-hydroxy-3-methyl-2-ketobutyrate (HMKB). In the reductase reaction, this 2-ketoacid undergoes a metal-dependent reduction by NADPH to yield (R)-2,3-dihydroxy-isovalerate. The protein is Ketol-acid reductoisomerase (NADP(+)) of Chlorobium chlorochromatii (strain CaD3).